The chain runs to 227 residues: DNA repair protein RecO (227 aa).

Belongs to the RecO family.

Functionally, involved in DNA repair and RecF pathway recombination. The sequence is that of DNA repair protein RecO from Pseudomonas putida (strain W619).